We begin with the raw amino-acid sequence, 260 residues long: Thiazole synthase (260 aa).

Residue K102 is the Schiff-base intermediate with DXP of the active site. Residues G163, A189–G190, and N211–T212 contribute to the 1-deoxy-D-xylulose 5-phosphate site.

The protein belongs to the ThiG family. As to quaternary structure, homotetramer. Forms heterodimers with either ThiH or ThiS.

The protein resides in the cytoplasm. It catalyses the reaction [ThiS sulfur-carrier protein]-C-terminal-Gly-aminoethanethioate + 2-iminoacetate + 1-deoxy-D-xylulose 5-phosphate = [ThiS sulfur-carrier protein]-C-terminal Gly-Gly + 2-[(2R,5Z)-2-carboxy-4-methylthiazol-5(2H)-ylidene]ethyl phosphate + 2 H2O + H(+). It functions in the pathway cofactor biosynthesis; thiamine diphosphate biosynthesis. Catalyzes the rearrangement of 1-deoxy-D-xylulose 5-phosphate (DXP) to produce the thiazole phosphate moiety of thiamine. Sulfur is provided by the thiocarboxylate moiety of the carrier protein ThiS. In vitro, sulfur can be provided by H(2)S. In Geobacter sulfurreducens (strain ATCC 51573 / DSM 12127 / PCA), this protein is Thiazole synthase.